The sequence spans 493 residues: Adenylyltransferase and sulfurtransferase uba4 (493 aa).

ATP contacts are provided by residues glycine 99, aspartate 120, 127-131 (SNLHR), lysine 144, and 188-189 (DN). Positions 237 and 240 each coordinate Zn(2+). Cysteine 254 (glycyl thioester intermediate; for adenylyltransferase activity) is an active-site residue. Residues cysteine 316 and cysteine 319 each coordinate Zn(2+). A Rhodanese domain is found at 376–491 (INKEPTIIDV…WREQIDPDWP (116 aa)). Cysteine 446 (cysteine persulfide intermediate; for sulfurtransferase activity) is an active-site residue.

It in the N-terminal section; belongs to the HesA/MoeB/ThiF family. UBA4 subfamily. Zn(2+) serves as cofactor.

It localises to the cytoplasm. The protein localises to the cytosol. It catalyses the reaction [molybdopterin-synthase sulfur-carrier protein]-C-terminal Gly-Gly + ATP + H(+) = [molybdopterin-synthase sulfur-carrier protein]-C-terminal Gly-Gly-AMP + diphosphate. It carries out the reaction [molybdopterin-synthase sulfur-carrier protein]-C-terminal Gly-Gly-AMP + S-sulfanyl-L-cysteinyl-[cysteine desulfurase] + AH2 = [molybdopterin-synthase sulfur-carrier protein]-C-terminal-Gly-aminoethanethioate + L-cysteinyl-[cysteine desulfurase] + A + AMP + 2 H(+). The protein operates within tRNA modification; 5-methoxycarbonylmethyl-2-thiouridine-tRNA biosynthesis. It participates in cofactor biosynthesis; molybdopterin biosynthesis. In terms of biological role, plays a central role in 2-thiolation of mcm(5)S(2)U at tRNA wobble positions of cytosolic tRNA(Lys), tRNA(Glu) and tRNA(Gln). Also essential during biosynthesis of the molybdenum cofactor. Acts by mediating the C-terminal thiocarboxylation of sulfur carriers urm1 and mocs2a. Its N-terminus first activates urm1 and mocs2a as acyl-adenylates (-COAMP), then the persulfide sulfur on the catalytic cysteine is transferred to urm1 and mocs2a to form thiocarboxylation (-COSH) of their C-terminus. The reaction probably involves hydrogen sulfide that is generated from the persulfide intermediate and that acts as a nucleophile towards urm1 and mocs2a. Subsequently, a transient disulfide bond is formed. Does not use thiosulfate as sulfur donor; nfs1 probably acting as a sulfur donor for thiocarboxylation reactions. The chain is Adenylyltransferase and sulfurtransferase uba4 from Aspergillus fumigatus (strain CBS 144.89 / FGSC A1163 / CEA10) (Neosartorya fumigata).